The primary structure comprises 146 residues: MNIIAQLEAEQCAKIAEKRQLPAFQVGDTVRVMVRVTEGTRTRVQAYEGVCIARSGYGFNENFTVRKISYGEGVERVFPFYSPLIEGVELVRRGKVRRAKLYYLRALRGKAARIAEKRDYRKKNVQIVEEEVAPAVEANVETTTAE.

Belongs to the bacterial ribosomal protein bL19 family.

Functionally, this protein is located at the 30S-50S ribosomal subunit interface and may play a role in the structure and function of the aminoacyl-tRNA binding site. The polypeptide is Large ribosomal subunit protein bL19 (Bartonella bacilliformis (strain ATCC 35685 / KC583 / Herrer 020/F12,63)).